Here is a 66-residue protein sequence, read N- to C-terminus: Alpha-actitoxin-Ms11a-1 (66 aa).

The first 24 residues, 1–24 (MASKIFFVLAVFLVMSAVLPESFA), serve as a signal peptide directing secretion. Cystine bridges form between cysteine 26-cysteine 41, cysteine 33-cysteine 46, and cysteine 40-cysteine 61.

It localises to the secreted. The protein localises to the nematocyst. Alpha-toxins act on postsynaptic membranes, they bind to the nicotinic acetylcholine receptors (nAChR) and thus inhibit them. This toxin competes with alpha-bungarotoxin for binding to orthosteric sites on muscle-type T.carlifornicus (IC(50)=408 nM) and human alpha-7/CHRNA7 nAChRs (IC(50)=14.16 uM). The chain is Alpha-actitoxin-Ms11a-1 from Metridium senile (Brown sea anemone).